A 207-amino-acid polypeptide reads, in one-letter code: Ras-related protein Rab7A (207 aa).

GTP is bound by residues 15-22, 63-67, and 125-128; these read GDSGVGKT, DTAGQ, and NKID. 2 S-geranylgeranyl cysteine lipidation sites follow: Cys205 and Cys207. Cys207 carries the post-translational modification Cysteine methyl ester.

This sequence belongs to the small GTPase superfamily. Rab family.

Its subcellular location is the cell membrane. In terms of biological role, protein transport. Probably involved in vesicular traffic. This chain is Ras-related protein Rab7A, found in Mesembryanthemum crystallinum (Common ice plant).